The sequence spans 272 residues: Type II secretion system protein C (272 aa).

Residues Met-1–Arg-16 are Cytoplasmic-facing. Residues Ile-17–Trp-35 form a helical membrane-spanning segment. Over Arg-36–Glu-272 the chain is Periplasmic.

Belongs to the GSP C family.

It localises to the cell inner membrane. Involved in a type II secretion system (T2SS, formerly general secretion pathway, GSP) for the export of proteins. Required for the translocation of the multiple pectic enzymes. This chain is Type II secretion system protein C (outC), found in Dickeya chrysanthemi (Pectobacterium chrysanthemi).